The following is a 1285-amino-acid chain: DNA polymerase II large subunit (1285 aa).

The disordered stretch occupies residues 565-586 (TRIGGRMGRPGKSKPREMRPPP).

This sequence belongs to the archaeal DNA polymerase II family. As to quaternary structure, heterodimer of a large subunit and a small subunit. In terms of processing, this protein undergoes a protein self splicing that involves a post-translational excision of the intervening region (intein) followed by peptide ligation.

It catalyses the reaction DNA(n) + a 2'-deoxyribonucleoside 5'-triphosphate = DNA(n+1) + diphosphate. The enzyme catalyses Exonucleolytic cleavage in the 3'- to 5'-direction to yield nucleoside 5'-phosphates.. Its function is as follows. Possesses two activities: a DNA synthesis (polymerase) and an exonucleolytic activity that degrades single-stranded DNA in the 3'- to 5'-direction. Has a template-primer preference which is characteristic of a replicative DNA polymerase. The chain is DNA polymerase II large subunit from Methanoculleus marisnigri (strain ATCC 35101 / DSM 1498 / JR1).